We begin with the raw amino-acid sequence, 147 residues long: Ubiquitin-conjugating enzyme E2 D2B (147 aa).

Residues 1–147 form the UBC core domain; sequence MALKRIHKEL…AREWTQKYAM (147 aa). Cys85 acts as the Glycyl thioester intermediate in catalysis.

The protein belongs to the ubiquitin-conjugating enzyme family. In terms of assembly, interacts with CNOT4 (via RING domain). As to expression, testis-specific. Mainly expressed in the round spermatids (at protein level).

It carries out the reaction S-ubiquitinyl-[E1 ubiquitin-activating enzyme]-L-cysteine + [E2 ubiquitin-conjugating enzyme]-L-cysteine = [E1 ubiquitin-activating enzyme]-L-cysteine + S-ubiquitinyl-[E2 ubiquitin-conjugating enzyme]-L-cysteine.. The protein operates within protein modification; protein ubiquitination. Catalyzes the covalent attachment of ubiquitin to other proteins. Mediates the selective degradation of short-lived and abnormal proteins. Functions in the E6/E6-AP-induced ubiquitination of p53/TP53. Mediates ubiquitination of PEX5 and SQSTM1 and autoubiquitination of STUB1 and TRAF6. Involved in the signal-induced conjugation and subsequent degradation of NFKBIA, FBXW2-mediated GCM1 ubiquitination and degradation, MDM2-dependent degradation of p53/TP53 and the activation of MAVS in the mitochondria by RIGI in response to viral infection Plays a role in early maturation of the testis. This chain is Ubiquitin-conjugating enzyme E2 D2B (Ube2d2b), found in Rattus norvegicus (Rat).